Consider the following 153-residue polypeptide: uncharacterized protein (153 aa).

This is an uncharacterized protein from Ureaplasma parvum serovar 3 (strain ATCC 700970).